The chain runs to 190 residues: Hypoxanthine/guanine phosphoribosyltransferase (190 aa).

This sequence belongs to the purine/pyrimidine phosphoribosyltransferase family. Archaeal HPRT subfamily. Homodimer.

The protein localises to the cytoplasm. The catalysed reaction is IMP + diphosphate = hypoxanthine + 5-phospho-alpha-D-ribose 1-diphosphate. It catalyses the reaction GMP + diphosphate = guanine + 5-phospho-alpha-D-ribose 1-diphosphate. It participates in purine metabolism; IMP biosynthesis via salvage pathway; IMP from hypoxanthine: step 1/1. Functionally, catalyzes a salvage reaction resulting in the formation of IMP that is energically less costly than de novo synthesis. In Methanohalophilus mahii (strain ATCC 35705 / DSM 5219 / SLP), this protein is Hypoxanthine/guanine phosphoribosyltransferase.